We begin with the raw amino-acid sequence, 43 residues long: DRDSCVDKSRCAKYGYYQQCEICCKKAGHRGGTCEFFKCKCKV.

Cystine bridges form between C5–C23, C11–C34, C20–C39, and C24–C41.

The protein belongs to the ergtoxin family. Gamma-KTx 3 subfamily. As to expression, expressed by the venom gland.

It is found in the secreted. Blocks Kv11/ERG potassium channels. The polypeptide is Potassium channel toxin gamma-KTx 3.2 (Centruroides elegans (Bark scorpion)).